The chain runs to 37 residues: Large ribosomal subunit protein bL36 (37 aa).

The protein belongs to the bacterial ribosomal protein bL36 family.

The sequence is that of Large ribosomal subunit protein bL36 from Streptomyces avermitilis (strain ATCC 31267 / DSM 46492 / JCM 5070 / NBRC 14893 / NCIMB 12804 / NRRL 8165 / MA-4680).